We begin with the raw amino-acid sequence, 366 residues long: tRNA-specific 2-thiouridylase MnmA (366 aa).

ATP-binding positions include 10–17 (GLSGGVDS) and Ile36. The active-site Nucleophile is the Cys98. A disulfide bond links Cys98 and Cys194. Residue Gly122 coordinates ATP. Residues 144–146 (KDQ) form an interaction with tRNA region. Catalysis depends on Cys194, which acts as the Cysteine persulfide intermediate. Positions 303-304 (RY) are interaction with tRNA.

It belongs to the MnmA/TRMU family.

The protein localises to the cytoplasm. The enzyme catalyses S-sulfanyl-L-cysteinyl-[protein] + uridine(34) in tRNA + AH2 + ATP = 2-thiouridine(34) in tRNA + L-cysteinyl-[protein] + A + AMP + diphosphate + H(+). In terms of biological role, catalyzes the 2-thiolation of uridine at the wobble position (U34) of tRNA, leading to the formation of s(2)U34. In Chlorobaculum tepidum (strain ATCC 49652 / DSM 12025 / NBRC 103806 / TLS) (Chlorobium tepidum), this protein is tRNA-specific 2-thiouridylase MnmA.